The sequence spans 520 residues: Pentatricopeptide repeat-containing protein At1g28690, mitochondrial (520 aa).

A mitochondrion-targeting transit peptide spans 1–19 (MRIFRFTSISPRILPSNHY). PPR repeat units lie at residues 68–98 (DLNI…LPKP), 99–133 (TLSA…GEKA), 134–168 (DGYT…RIIK), 174–208 (DDVL…NVVC), 209–235 (CTSM…TKVK), 236–271 (DIVV…GFHP), 272–306 (NIST…GVYT), 307–337 (HIKM…MQEK), 338–372 (NVFS…RIEP), 373–403 (NYVT…MQRD), and 409–439 (KMEH…MPER). The interval 444-520 (IWAALLSSCN…TIGRSWTSED (77 aa)) is type E motif.

It belongs to the PPR family. PCMP-E subfamily.

It is found in the mitochondrion. This chain is Pentatricopeptide repeat-containing protein At1g28690, mitochondrial (PCMP-E34), found in Arabidopsis thaliana (Mouse-ear cress).